The following is a 352-amino-acid chain: Keratocan (352 aa).

An N-terminal signal peptide occupies residues 1–20; it reads MASTICFILWVVFVTDTVWT. One can recognise an LRRNT domain in the interval 33–71; the sequence is EDWTMHDFDCPRECFCPPSFPTALYCENRGLKEIPAIPS. 2 disulfides stabilise this stretch: Cys-42–Cys-48 and Cys-46–Cys-58. LRR repeat units follow at residues 72–93, 96–117, 122–142, 143–164, 167–180, 193–214, 215–235, and 238–258; these read RIWY…PFEN, QLRW…KGAL, KLLF…PLPR, SLEQ…TFSN, NLTL…KLLD, NLMQ…LPAN, TMQV…YFNV, and KVAF…PSSG. Residue Asn-93 is glycosylated (N-linked (GlcNAc...) (keratan sulfate) asparagine). Asn-167 is a glycosylation site (N-linked (GlcNAc...) (keratan sulfate) asparagine). The N-linked (GlcNAc...) asparagine glycan is linked to Asn-222. An N-linked (GlcNAc...) (keratan sulfate) asparagine glycan is attached at Asn-260. LRR repeat units follow at residues 263-282 and 283-304; these read SILD…KISA and HLQH…VICP. An N-linked (GlcNAc...) asparagine glycan is attached at Asn-298. The cysteines at positions 303 and 343 are disulfide-linked.

The protein belongs to the small leucine-rich proteoglycan (SLRP) family. SLRP class II subfamily. Binds three long, highly sulfated keratan sulfate chains in the cornea but short, non-sulfated poly(N-acetyllactosamine) chains in other tissues. In terms of processing, the N-terminus is blocked. As to expression, abundant in cornea and sclera but also found in other tissues.

The protein localises to the secreted. The protein resides in the extracellular space. Its subcellular location is the extracellular matrix. In terms of biological role, may be important in developing and maintaining corneal transparency and for the structure of the stromal matrix. This Bos taurus (Bovine) protein is Keratocan (KERA).